A 309-amino-acid chain; its full sequence is tRNA dimethylallyltransferase (309 aa).

Position 9 to 16 (9 to 16) interacts with ATP; sequence GPTAVGKT. 11-16 contributes to the substrate binding site; that stretch reads TAVGKT. Residues 34–37 are interaction with substrate tRNA; it reads DSMQ.

This sequence belongs to the IPP transferase family. In terms of assembly, monomer. It depends on Mg(2+) as a cofactor.

It carries out the reaction adenosine(37) in tRNA + dimethylallyl diphosphate = N(6)-dimethylallyladenosine(37) in tRNA + diphosphate. Functionally, catalyzes the transfer of a dimethylallyl group onto the adenine at position 37 in tRNAs that read codons beginning with uridine, leading to the formation of N6-(dimethylallyl)adenosine (i(6)A). The chain is tRNA dimethylallyltransferase from Clostridium kluyveri (strain NBRC 12016).